Here is a 379-residue protein sequence, read N- to C-terminus: tRNA-specific 2-thiouridylase MnmA (379 aa).

Residues 16–23 and Met42 contribute to the ATP site; that span reads GLSGGVDS. An interaction with target base in tRNA region spans residues 102-104; it reads NPD. Cys107 (nucleophile) is an active-site residue. The cysteines at positions 107 and 204 are disulfide-linked. An ATP-binding site is contributed by Gly131. Residues 154 to 156 are interaction with tRNA; it reads KDQ. The active-site Cysteine persulfide intermediate is Cys204. The tract at residues 316–317 is interaction with tRNA; sequence RY.

This sequence belongs to the MnmA/TRMU family.

The protein localises to the cytoplasm. The enzyme catalyses S-sulfanyl-L-cysteinyl-[protein] + uridine(34) in tRNA + AH2 + ATP = 2-thiouridine(34) in tRNA + L-cysteinyl-[protein] + A + AMP + diphosphate + H(+). Catalyzes the 2-thiolation of uridine at the wobble position (U34) of tRNA, leading to the formation of s(2)U34. The protein is tRNA-specific 2-thiouridylase MnmA of Hydrogenovibrio crunogenus (strain DSM 25203 / XCL-2) (Thiomicrospira crunogena).